The following is a 160-amino-acid chain: ATP synthase subunit b 3 (160 aa).

The helical transmembrane segment at 5–25 (PTFWVLVAFVLFVAAVWRIAA) threads the bilayer.

The protein belongs to the ATPase B chain family. F-type ATPases have 2 components, F(1) - the catalytic core - and F(0) - the membrane proton channel. F(1) has five subunits: alpha(3), beta(3), gamma(1), delta(1), epsilon(1). F(0) has three main subunits: a(1), b(2) and c(10-14). The alpha and beta chains form an alternating ring which encloses part of the gamma chain. F(1) is attached to F(0) by a central stalk formed by the gamma and epsilon chains, while a peripheral stalk is formed by the delta and b chains.

It localises to the cell inner membrane. F(1)F(0) ATP synthase produces ATP from ADP in the presence of a proton or sodium gradient. F-type ATPases consist of two structural domains, F(1) containing the extramembraneous catalytic core and F(0) containing the membrane proton channel, linked together by a central stalk and a peripheral stalk. During catalysis, ATP synthesis in the catalytic domain of F(1) is coupled via a rotary mechanism of the central stalk subunits to proton translocation. Its function is as follows. Component of the F(0) channel, it forms part of the peripheral stalk, linking F(1) to F(0). In Rhodospirillum centenum (strain ATCC 51521 / SW), this protein is ATP synthase subunit b 3.